We begin with the raw amino-acid sequence, 460 residues long: Pyruvate dehydrogenase E1 component subunit beta (460 aa).

Residues 2 to 78 enclose the Lipoyl-binding domain; sequence PVEILMPALS…KVNTPIAVLL (77 aa). Lys43 carries the post-translational modification N6-lipoyllysine. The interval 91-131 is disordered; it reads KTEAPKAETPKPAAAEAPAASAAPVAAQPKADVPSDPAIPA. Residues 100 to 121 are compositionally biased toward low complexity; sequence PKPAAAEAPAASAAPVAAQPKA. Residue Glu194 participates in thiamine diphosphate binding.

Heterodimer of an alpha and a beta chain. Requires (R)-lipoate as cofactor. Thiamine diphosphate serves as cofactor.

The catalysed reaction is N(6)-[(R)-lipoyl]-L-lysyl-[protein] + pyruvate + H(+) = N(6)-[(R)-S(8)-acetyldihydrolipoyl]-L-lysyl-[protein] + CO2. Its function is as follows. The pyruvate dehydrogenase complex catalyzes the overall conversion of pyruvate to acetyl-CoA and CO(2). It contains multiple copies of three enzymatic components: pyruvate dehydrogenase (E1), dihydrolipoamide acetyltransferase (E2) and lipoamide dehydrogenase (E3). This chain is Pyruvate dehydrogenase E1 component subunit beta (pdhB), found in Rhizobium meliloti (strain 1021) (Ensifer meliloti).